The following is a 562-amino-acid chain: NAD-dependent malic enzyme (562 aa).

The active-site Proton donor is the tyrosine 101. NAD(+) is bound at residue arginine 154. Lysine 172 serves as the catalytic Proton acceptor. Residues glutamate 243, aspartate 244, and aspartate 267 each coordinate a divalent metal cation. The NAD(+) site is built by aspartate 267 and asparagine 415.

The protein belongs to the malic enzymes family. In terms of assembly, homotetramer. Requires Mg(2+) as cofactor. The cofactor is Mn(2+).

It carries out the reaction (S)-malate + NAD(+) = pyruvate + CO2 + NADH. The catalysed reaction is oxaloacetate + H(+) = pyruvate + CO2. The chain is NAD-dependent malic enzyme from Idiomarina loihiensis (strain ATCC BAA-735 / DSM 15497 / L2-TR).